A 266-amino-acid polypeptide reads, in one-letter code: Shikimate dehydrogenase (NADP(+)) (266 aa).

Shikimate-binding positions include 16–18 (SKS) and threonine 65. The active-site Proton acceptor is lysine 69. Shikimate contacts are provided by asparagine 90 and aspartate 105. NADP(+) contacts are provided by residues 128–132 (GAGGS) and leucine 211. Tyrosine 213 contacts shikimate. Residue glycine 233 participates in NADP(+) binding.

Belongs to the shikimate dehydrogenase family. Homodimer.

It catalyses the reaction shikimate + NADP(+) = 3-dehydroshikimate + NADPH + H(+). The protein operates within metabolic intermediate biosynthesis; chorismate biosynthesis; chorismate from D-erythrose 4-phosphate and phosphoenolpyruvate: step 4/7. In terms of biological role, involved in the biosynthesis of the chorismate, which leads to the biosynthesis of aromatic amino acids. Catalyzes the reversible NADPH linked reduction of 3-dehydroshikimate (DHSA) to yield shikimate (SA). This Helicobacter pylori (strain J99 / ATCC 700824) (Campylobacter pylori J99) protein is Shikimate dehydrogenase (NADP(+)).